We begin with the raw amino-acid sequence, 211 residues long: Redox-sensing transcriptional repressor Rex (211 aa).

Residues 18 to 57 constitute a DNA-binding region (H-T-H motif); it reads LYYRFLKNLHASGKQRVSSAELSEAVKVDSATIRRDFSYF. 92 to 97 is a binding site for NAD(+); sequence GVGNLG.

The protein belongs to the transcriptional regulatory Rex family. In terms of assembly, homodimer.

It is found in the cytoplasm. In terms of biological role, modulates transcription in response to changes in cellular NADH/NAD(+) redox state. The chain is Redox-sensing transcriptional repressor Rex from Anoxybacillus flavithermus (strain DSM 21510 / WK1).